We begin with the raw amino-acid sequence, 775 residues long: Chitin synthase 6 (775 aa).

The next 6 helical transmembrane spans lie at 19 to 39 (VLLMACLEWFLWLAAFLYCLV), 54 to 74 (CIIVGTAFVLLRVIFLPIMVV), 94 to 114 (LQWFAFWAFAILLTVPWLFCI), 441 to 461 (FMQNTIRTTALLFFVMVLAIM), 470 to 490 (LPVGFIAISLGLNWMLMLYFG), and 498 to 518 (IWLYPLMFILNPFYNWYYMVY). The segment covering 532–541 (RADAAAADSH) has biased composition (low complexity). Disordered regions lie at residues 532–603 (RADA…DGKF) and 702–775 (PSAF…KTSR). Basic and acidic residues predominate over residues 542–556 (TTAREAAEQAEKQGD). Polar residues predominate over residues 577–586 (NRESTTTSEL). Low complexity predominate over residues 702-713 (PSAFPHAHSASA). Residue Asn724 is glycosylated (N-linked (GlcNAc...) asparagine). Basic and acidic residues predominate over residues 732 to 741 (RSEDIQRFSE). Residues 754–763 (SRNVGNSSFA) are compositionally biased toward polar residues. An N-linked (GlcNAc...) asparagine glycan is attached at Asn759. Basic residues predominate over residues 766-775 (MAKRTPKTSR).

It belongs to the chitin synthase family. Class VII subfamily.

It localises to the cell membrane. It catalyses the reaction [(1-&gt;4)-N-acetyl-beta-D-glucosaminyl](n) + UDP-N-acetyl-alpha-D-glucosamine = [(1-&gt;4)-N-acetyl-beta-D-glucosaminyl](n+1) + UDP + H(+). In terms of biological role, polymerizes chitin, a structural polymer of the cell wall and septum, by transferring the sugar moiety of UDP-GlcNAc to the non-reducing end of the growing chitin polymer. Shows additive effects in septum formation with CHS1, CHS2, CHS3A, CHS4, CHS5 and CHS7. Involved in virulence and mediates mycotoxin deoxinivalenol (DON) biosynthesis via the regulation of the expression of TRI4, TRI5 and TRI6. This Gibberella zeae (strain ATCC MYA-4620 / CBS 123657 / FGSC 9075 / NRRL 31084 / PH-1) (Wheat head blight fungus) protein is Chitin synthase 6.